Reading from the N-terminus, the 260-residue chain is MGRGKIEIKRIENATNRQVTFSKRRGGLLKKANELAVLCDARVGVVIFSSTGKMFEYCSPTCSLRELIEHYQTVTNTHFEEINHDQQIFVEMTRMRNEMEKLDGGIRRFTGDDLSNLTLADINDLEQQLEFSVTKVRARKHQLLNQQLDNLRRKEHILEDQNSFLCRMINENHHQAAVGGGDVKAMVEMAPVLSMLTAAPAYYGEESSSTALQLTPPLHAVDAAAAAGFRLQPTQPNLQDPGCSSSSFHAAAAGHGLQLW.

The MADS-box domain occupies 1-61; it reads MGRGKIEIKR…GKMFEYCSPT (61 aa). In terms of domain architecture, K-box spans 85 to 175; the sequence is DQQIFVEMTR…CRMINENHHQ (91 aa).

In terms of tissue distribution, expressed in developing seeds.

It localises to the nucleus. In terms of biological role, probable transcription factor. This is MADS-box transcription factor 29 (MADS29) from Oryza sativa subsp. japonica (Rice).